Reading from the N-terminus, the 299-residue chain is MSKKLSVQEIILTLQKFWSDQGCMLMQSYDTEKGAGTMSPYTFLRAIGPEPWNAAYVEPSRRPADGRYGENPNRLYQHHQFQVVMKPSPENVQDLYLQSLEKLGINPLEHDIRFVEDNWENPSMGCAGVGWEVWLDGMEISQFTYFQQVGGLEVDPVTSEITYGLERLSSYIQDVNSVFDLEWGDGVKYGDIFLEPEFENSKYAFEDSNEELLLMLFDEYEKEAKRQIKNGLVHPAYDYCLKCSHTFNLMDARGMVSVTERAGYLDRIRNMAKSIAKEFVAQREKRGFPLLKHAQEETK.

The protein belongs to the class-II aminoacyl-tRNA synthetase family. As to quaternary structure, tetramer of two alpha and two beta subunits.

Its subcellular location is the cytoplasm. It carries out the reaction tRNA(Gly) + glycine + ATP = glycyl-tRNA(Gly) + AMP + diphosphate. The chain is Glycine--tRNA ligase alpha subunit from Lactiplantibacillus plantarum (strain ATCC BAA-793 / NCIMB 8826 / WCFS1) (Lactobacillus plantarum).